We begin with the raw amino-acid sequence, 336 residues long: Acetaldehyde dehydrogenase 1 (336 aa).

Residue 32 to 35 (SGVV) coordinates NAD(+). Cys-150 acts as the Acyl-thioester intermediate in catalysis. Position 309 (Asn-309) interacts with NAD(+).

This sequence belongs to the acetaldehyde dehydrogenase family.

It carries out the reaction acetaldehyde + NAD(+) + CoA = acetyl-CoA + NADH + H(+). This is Acetaldehyde dehydrogenase 1 (mhpF) from Mycobacterium ulcerans (strain Agy99).